Consider the following 118-residue polypeptide: Basic phospholipase A2 homolog 1 (118 aa).

Intrachain disulfides connect Cys11/Cys71, Cys27/Cys117, Cys29/Cys45, Cys44/Cys98, Cys51/Cys91, Cys60/Cys84, and Cys78/Cys89. The tract at residues 106–118 is important for membrane-damaging activities in eukaryotes and bacteria; heparin-binding; sequence NKNFNIDTKKRCK.

This sequence belongs to the phospholipase A2 family. Group I subfamily. D49 sub-subfamily. In terms of tissue distribution, expressed by the venom gland.

Its subcellular location is the secreted. The chain is Basic phospholipase A2 homolog 1 from Laticauda colubrina (Yellow-lipped sea krait).